The primary structure comprises 180 residues: Small ribosomal subunit protein uS5 (180 aa).

In terms of domain architecture, S5 DRBM spans 13–76 (LEERVVQINR…EAAKKNLIRV (64 aa)).

The protein belongs to the universal ribosomal protein uS5 family. In terms of assembly, part of the 30S ribosomal subunit. Contacts proteins S4 and S8.

Functionally, with S4 and S12 plays an important role in translational accuracy. Its function is as follows. Located at the back of the 30S subunit body where it stabilizes the conformation of the head with respect to the body. The sequence is that of Small ribosomal subunit protein uS5 from Roseiflexus sp. (strain RS-1).